Here is a 514-residue protein sequence, read N- to C-terminus: 2-isopropylmalate synthase (514 aa).

The region spanning 8–270 (IRIFDTTLRD…DCGVVTEQLF (263 aa)) is the Pyruvate carboxyltransferase domain. 4 residues coordinate Mn(2+): Asp-17, His-205, His-207, and Asn-241. The segment at 394-514 (RLVNLSVQCS…KEEEQEKEGI (121 aa)) is regulatory domain.

The protein belongs to the alpha-IPM synthase/homocitrate synthase family. LeuA type 1 subfamily. Homodimer. Mn(2+) serves as cofactor.

Its subcellular location is the cytoplasm. The catalysed reaction is 3-methyl-2-oxobutanoate + acetyl-CoA + H2O = (2S)-2-isopropylmalate + CoA + H(+). The protein operates within amino-acid biosynthesis; L-leucine biosynthesis; L-leucine from 3-methyl-2-oxobutanoate: step 1/4. Functionally, catalyzes the condensation of the acetyl group of acetyl-CoA with 3-methyl-2-oxobutanoate (2-ketoisovalerate) to form 3-carboxy-3-hydroxy-4-methylpentanoate (2-isopropylmalate). In Nitratidesulfovibrio vulgaris (strain DSM 19637 / Miyazaki F) (Desulfovibrio vulgaris), this protein is 2-isopropylmalate synthase.